The sequence spans 376 residues: MSGKSPAQTRVVVGMSGGVDSSVTALLLKEQGYDVIGVFMKNWDDTDENGVCTATEDYKDVAAVADQIGVPYYSVNFEKEYWDRVFEYFLAEYRAGRTPNPDVMCNKEIKFKAFLDYAMELGADYVATGHYAQVRTDEDGTVHMLRGADNNKDQTYFLSQLTQEQLKKTMFPLGHLEKPEVRRIAEKAGLATAKKKDSTGICFIGEKNFKKFLGEYLPAQPGKMMTLDGVEMGNHAGLMYYTIGQRGGLGIGGQHGQLTSDPWFVVGKDLTTNTLYVGQGFHHEHLYSTSLDASDLSFTREMPETFDLHCTAKFRYRQEDTGVTIHVNGDKVTVDFDEPVRAITPGQAVVFYDGEECLGGAMIDVAYKEQKVMQYQ.

ATP contacts are provided by residues 14 to 21 (GMSGGVDS) and methionine 40. The segment at 100-102 (NPD) is interaction with target base in tRNA. The active-site Nucleophile is the cysteine 105. The cysteines at positions 105 and 202 are disulfide-linked. Glycine 129 contributes to the ATP binding site. Positions 152-154 (KDQ) are interaction with tRNA. Residue cysteine 202 is the Cysteine persulfide intermediate of the active site. Positions 315 to 316 (RY) are interaction with tRNA.

This sequence belongs to the MnmA/TRMU family.

It localises to the cytoplasm. The enzyme catalyses S-sulfanyl-L-cysteinyl-[protein] + uridine(34) in tRNA + AH2 + ATP = 2-thiouridine(34) in tRNA + L-cysteinyl-[protein] + A + AMP + diphosphate + H(+). Functionally, catalyzes the 2-thiolation of uridine at the wobble position (U34) of tRNA, leading to the formation of s(2)U34. In Lactococcus lactis subsp. cremoris (strain MG1363), this protein is tRNA-specific 2-thiouridylase MnmA.